Reading from the N-terminus, the 337-residue chain is Replication-associated protein (337 aa).

Residues 12-114 (RLQTKYVFLT…DGNVITKGEF (103 aa)) enclose the CRESS-DNA virus Rep endonuclease domain. The RCR-1 signature appears at 19-22 (FLTY). Residues E53, H61, and H63 each contribute to the a divalent metal cation site. The RCR-2 signature appears at 61–63 (HLH). Y101 acts as the For DNA cleavage activity in catalysis. The RCR-3 motif lies at 101–104 (YISK). D105 provides a ligand contact to a divalent metal cation. An oligomerization region spans residues 163–175 (SANKLFPPQPEIY). ATP is bound at residue 216 to 223 (GPSRTGKT). The tract at residues 239–257 (IDFTVYDDHATYNVIDDIP) is transactivation. Residues 279–289 (KYGKKKKIKGG) carry the Nuclear localization signal motif.

Belongs to the geminiviridae Rep protein family. In terms of assembly, homooligomer. Rep binds to repeated DNA motifs (iterons). Forms the O-complex, which is a Rep-DNA complex involved in the initiation of RCR. Part of the C- and V-complexes which are RepA-Rep-DNA complexes involved in the c-sense and v-sense transcription. Mg(2+) serves as cofactor. Requires Mn(2+) as cofactor.

It localises to the host nucleus. In terms of biological role, essential for the replication of viral ssDNA. The closed circular ssDNA genome is first converted to a superhelical dsDNA. Rep binds a specific region at the genome origin of replication. It introduces an endonucleolytic nick within the conserved sequence 5'-TAATATTAC-3' in the intergenic region of the genome present in all geminiviruses, thereby initiating the rolling circle replication (RCR). Following cleavage, binds covalently to the 5'-phosphate of DNA as a tyrosyl ester. The cleavage gives rise to a free 3'-OH that serves as a primer for the cellular DNA polymerase. The polymerase synthesizes the (+) strand DNA by rolling circle mechanism. After one round of replication, a Rep-catalyzed nucleotidyl transfer reaction releases a circular single-stranded virus genome, thereby terminating the replication. Displays origin-specific DNA cleavage, nucleotidyl transferase, ATPase and helicase activities. Acts as an inhibitor of C-sense gene transcription. In Tobacco yellow dwarf virus (strain Australia) (TYDV), this protein is Replication-associated protein.